The chain runs to 303 residues: Imidazoleglycerol-phosphate dehydratase (303 aa).

This sequence belongs to the imidazoleglycerol-phosphate dehydratase family.

Its subcellular location is the cytoplasm. It carries out the reaction D-erythro-1-(imidazol-4-yl)glycerol 3-phosphate = 3-(imidazol-4-yl)-2-oxopropyl phosphate + H2O. Its pathway is amino-acid biosynthesis; L-histidine biosynthesis; L-histidine from 5-phospho-alpha-D-ribose 1-diphosphate: step 6/9. The chain is Imidazoleglycerol-phosphate dehydratase from Neisseria gonorrhoeae (strain ATCC 700825 / FA 1090).